The following is a 401-amino-acid chain: cAMP-dependent protein kinase type II-alpha regulatory subunit (401 aa).

S2 bears the N-acetylserine mark. A dimerization and phosphorylation region spans residues 2–135; that stretch reads SHIQIPPGLT…RLQEACKDIL (134 aa). Phosphoserine is present on residues S47, S74, S76, and S96. Residues 61-83 are disordered; the sequence is ESSAVPVIEEDGESDSDSEDADL. Over residues 68-83 the composition is skewed to acidic residues; the sequence is IEEDGESDSDSEDADL. 3',5'-cyclic AMP is bound by residues 136–257, E205, R214, 258–401, E335, and R344; these read LFKN…ESVP and LFKS…DPGQ. Residue T212 is modified to Phosphothreonine; by PDPK1. A phosphoserine mark is found at S347 and S392.

This sequence belongs to the cAMP-dependent kinase regulatory chain family. In terms of assembly, the inactive form of the enzyme is composed of two regulatory chains and two catalytic chains. Activation by cAMP produces two active catalytic monomers and a regulatory dimer that binds four cAMP molecules. Interacts with AKAP4. Interacts with CBFA2T3. Interacts with the phosphorylated form of PJA2. Interacts with MYRIP. This interaction may link PKA to components of the exocytosis machinery, thus facilitating exocytosis, including insulin release. Forms a complex composed of PRKAR2A, GSK3B and GSKIP through GSKIP interaction; facilitates PKA-induced phosphorylation and regulates GSK3B activity. Interacts with ADCY8; inhibits adenylate cyclase activity through PKA phosphorylation. Phosphorylated by the activated catalytic chain. Four types of regulatory chains are found: I-alpha, I-beta, II-alpha, and II-beta. Their expression varies among tissues and is in some cases constitutive and in others inducible.

Its subcellular location is the cytoplasm. It is found in the cell membrane. In terms of biological role, regulatory subunit of the cAMP-dependent protein kinases involved in cAMP signaling in cells. Type II regulatory chains mediate membrane association by binding to anchoring proteins, including the MAP2 kinase. In Mus musculus (Mouse), this protein is cAMP-dependent protein kinase type II-alpha regulatory subunit (Prkar2a).